A 547-amino-acid chain; its full sequence is Chaperonin GroEL (547 aa).

ATP is bound by residues 30-33, Lys-51, 87-91, Gly-415, 480-482, and Asp-496; these read TLGP, DGTTT, and NAA. The disordered stretch occupies residues 525 to 547; sequence KPDDKPAMPPMGGGMGGMGGMDF. Over residues 535–547 the composition is skewed to gly residues; that stretch reads MGGGMGGMGGMDF.

This sequence belongs to the chaperonin (HSP60) family. As to quaternary structure, forms a cylinder of 14 subunits composed of two heptameric rings stacked back-to-back. Interacts with the co-chaperonin GroES.

It is found in the cytoplasm. The enzyme catalyses ATP + H2O + a folded polypeptide = ADP + phosphate + an unfolded polypeptide.. Functionally, together with its co-chaperonin GroES, plays an essential role in assisting protein folding. The GroEL-GroES system forms a nano-cage that allows encapsulation of the non-native substrate proteins and provides a physical environment optimized to promote and accelerate protein folding. The polypeptide is Chaperonin GroEL (Novosphingobium aromaticivorans (strain ATCC 700278 / DSM 12444 / CCUG 56034 / CIP 105152 / NBRC 16084 / F199)).